The chain runs to 99 residues: Large ribosomal subunit protein uL23 (99 aa).

This sequence belongs to the universal ribosomal protein uL23 family. In terms of assembly, part of the 50S ribosomal subunit. Contacts protein L29, and trigger factor when it is bound to the ribosome.

Functionally, one of the early assembly proteins it binds 23S rRNA. One of the proteins that surrounds the polypeptide exit tunnel on the outside of the ribosome. Forms the main docking site for trigger factor binding to the ribosome. This Oenococcus oeni (strain ATCC BAA-331 / PSU-1) protein is Large ribosomal subunit protein uL23.